We begin with the raw amino-acid sequence, 999 residues long: Hypoxia up-regulated protein 1 (999 aa).

An N-terminal signal peptide occupies residues 1–32; it reads MAATVRRQRPRRLLCWTLVAVLLADLLALSDT. Residues Asn-155, Asn-222, and Asn-515 are each glycosylated (N-linked (GlcNAc...) asparagine). The segment at 564–694 is disordered; that stretch reads VEDSPEEEST…KKQKPARKQK (131 aa). At Ser-567 the chain carries Phosphoserine. A compositionally biased stretch (polar residues) spans 574-583; that stretch reads LTKLGNTISS. N-linked (GlcNAc...) asparagine glycosylation is present at Asn-596. Composition is skewed to basic and acidic residues over residues 611–626 and 641–670; these read GSKD…KEET and PKGD…EEKG. Residues Asn-830, Asn-862, and Asn-869 are each glycosylated (N-linked (GlcNAc...) asparagine). N6-acetyllysine is present on Lys-883. Positions 909-999 are disordered; that stretch reads AKFTKPRPRP…QKRSSKNDEL (91 aa). Residues Asn-922 and Asn-931 are each glycosylated (N-linked (GlcNAc...) asparagine). The segment covering 949–962 has biased composition (basic and acidic residues); the sequence is EEAKPILEPDKEET. The short motif at 996–999 is the Prevents secretion from ER element; that stretch reads NDEL.

Belongs to the heat shock protein 70 family. In terms of assembly, part of a large chaperone multiprotein complex comprising DNAJB11, HSP90B1, HSPA5, HYOU, PDIA2, PDIA4, PDIA6, PPIB, SDF2L1, UGGT1 and very small amounts of ERP29, but not, or at very low levels, CALR nor CANX.

Its subcellular location is the endoplasmic reticulum lumen. In terms of biological role, has a pivotal role in cytoprotective cellular mechanisms triggered by oxygen deprivation. Promotes HSPA5/BiP-mediated ATP nucleotide exchange and thereby activates the unfolded protein response (UPR) pathway in the presence of endoplasmic reticulum stress. May play a role as a molecular chaperone and participate in protein folding. The polypeptide is Hypoxia up-regulated protein 1 (HYOU1) (Cricetulus griseus (Chinese hamster)).